The primary structure comprises 450 residues: Phosphoglucosamine mutase (450 aa).

The active-site Phosphoserine intermediate is the S97. The Mg(2+) site is built by S97, D236, D238, and D240. S97 is subject to Phosphoserine.

It belongs to the phosphohexose mutase family. Mg(2+) serves as cofactor. Post-translationally, activated by phosphorylation.

The catalysed reaction is alpha-D-glucosamine 1-phosphate = D-glucosamine 6-phosphate. In terms of biological role, catalyzes the conversion of glucosamine-6-phosphate to glucosamine-1-phosphate. The chain is Phosphoglucosamine mutase from Prochlorococcus marinus (strain MIT 9312).